Consider the following 436-residue polypeptide: Phosphate-repressible acid phosphatase (436 aa).

Positions Met1–Ala20 are cleaved as a signal peptide. N-linked (GlcNAc...) asparagine glycosylation is found at Asn227, Asn283, and Asn304.

As to quaternary structure, monomer.

The enzyme catalyses a phosphate monoester + H2O = an alcohol + phosphate. The polypeptide is Phosphate-repressible acid phosphatase (pacA) (Aspergillus niger).